The primary structure comprises 168 residues: Ribosome maturation factor RimM (168 aa).

The PRC barrel domain occupies 96–168 (EGDYYWTDLI…IIVVEWDADF (73 aa)).

This sequence belongs to the RimM family. In terms of assembly, binds ribosomal protein uS19.

The protein localises to the cytoplasm. Its function is as follows. An accessory protein needed during the final step in the assembly of 30S ribosomal subunit, possibly for assembly of the head region. Essential for efficient processing of 16S rRNA. May be needed both before and after RbfA during the maturation of 16S rRNA. It has affinity for free ribosomal 30S subunits but not for 70S ribosomes. This Coxiella burnetii (strain RSA 331 / Henzerling II) protein is Ribosome maturation factor RimM.